The chain runs to 351 residues: Cyanuric acid amidohydrolase (351 aa).

Residues 1 to 96 (MPSLRAHVFR…HWTVFARETV (96 aa)) form an RU A region. Residues R53 and 77–78 (SG) each bind substrate. Residues 103–240 (ALAIGVSRTP…HEIIVLGMSA (138 aa)) are RU B. Residue K153 is part of the active site. Residues R185 and 223 to 224 (SS) contribute to the substrate site. The active-site Nucleophile is the S223. An RU C region spans residues 246–351 (LSIDHAVMLD…PVAIIVEKEQ (106 aa)). E283 lines the Mg(2+) pocket. Substrate contacts are provided by residues R310 and 329–330 (SG). Mg(2+)-binding residues include A332, Q335, G336, P337, and G340.

Belongs to the cyclic amide hydrolase (CyAH) family. In terms of assembly, homotetramer.

It carries out the reaction cyanurate + H2O = 1-carboxybiuret + H(+). It participates in xenobiotic degradation; atrazine degradation; biuret from cyanurate: step 1/1. Inhibited by barbituric acid. Functionally, responsible for the hydrolysis of cyanuric acid, an intermediate formed during catabolism of s-triazine based compounds in herbicides such as atrazine and polymers such as melamine. Catalyzes the hydrolytic opening of the s-triazine ring of cyanuric acid (2,4,6-trihydroxy-s-triazine) to yield carbon dioxide and carboxybiuret, which spontaneously decarboxylates to biuret. This chain is Cyanuric acid amidohydrolase, found in Rhizobium leguminosarum bv. trifolii (strain WSM1325).